Consider the following 328-residue polypeptide: Phosphate acyltransferase (328 aa).

Belongs to the PlsX family. Homodimer. Probably interacts with PlsY.

It is found in the cytoplasm. It catalyses the reaction a fatty acyl-[ACP] + phosphate = an acyl phosphate + holo-[ACP]. Its pathway is lipid metabolism; phospholipid metabolism. Functionally, catalyzes the reversible formation of acyl-phosphate (acyl-PO(4)) from acyl-[acyl-carrier-protein] (acyl-ACP). This enzyme utilizes acyl-ACP as fatty acyl donor, but not acyl-CoA. The polypeptide is Phosphate acyltransferase (Campylobacter jejuni subsp. jejuni serotype O:2 (strain ATCC 700819 / NCTC 11168)).